The sequence spans 470 residues: Glutamyl-tRNA(Gln) amidotransferase subunit A (470 aa).

Residues Lys71 and Ser146 each act as charge relay system in the active site. Ser170 functions as the Acyl-ester intermediate in the catalytic mechanism.

Belongs to the amidase family. GatA subfamily. In terms of assembly, heterotrimer of A, B and C subunits.

It carries out the reaction L-glutamyl-tRNA(Gln) + L-glutamine + ATP + H2O = L-glutaminyl-tRNA(Gln) + L-glutamate + ADP + phosphate + H(+). Its function is as follows. Allows the formation of correctly charged Gln-tRNA(Gln) through the transamidation of misacylated Glu-tRNA(Gln) in organisms which lack glutaminyl-tRNA synthetase. The reaction takes place in the presence of glutamine and ATP through an activated gamma-phospho-Glu-tRNA(Gln). This is Glutamyl-tRNA(Gln) amidotransferase subunit A from Akkermansia muciniphila (strain ATCC BAA-835 / DSM 22959 / JCM 33894 / BCRC 81048 / CCUG 64013 / CIP 107961 / Muc).